The chain runs to 318 residues: NADH-ubiquinone oxidoreductase chain 1 (318 aa).

8 consecutive transmembrane segments (helical) span residues 2 to 22 (PMIN…FLML), 69 to 89 (ALYI…WTPL), 100 to 120 (LGLL…LWSG), 147 to 167 (AIIL…TLIT), 171 to 191 (HIWL…STLA), 222 to 242 (LFFM…TMIF), 253 to 273 (ELYT…FLWI), and 294 to 314 (LPLT…IASI).

It belongs to the complex I subunit 1 family. Core subunit of respiratory chain NADH dehydrogenase (Complex I) which is composed of 45 different subunits.

It is found in the mitochondrion inner membrane. The enzyme catalyses a ubiquinone + NADH + 5 H(+)(in) = a ubiquinol + NAD(+) + 4 H(+)(out). In terms of biological role, core subunit of the mitochondrial membrane respiratory chain NADH dehydrogenase (Complex I) which catalyzes electron transfer from NADH through the respiratory chain, using ubiquinone as an electron acceptor. Essential for the catalytic activity and assembly of complex I. The polypeptide is NADH-ubiquinone oxidoreductase chain 1 (MT-ND1) (Hylobates lar (Lar gibbon)).